Here is a 2798-residue protein sequence, read N- to C-terminus: Nipped-B-like protein (2798 aa).

Polar residues-rich tracts occupy residues 128–173 (LSQN…QNSP) and 191–208 (HPSS…SVSS). Residues 128–338 (LSQNSMHSSP…IKLGKDEKDQ (211 aa)) are disordered. 2 positions are modified to phosphoserine: serine 150 and serine 162. Residues 234 to 249 (HHADNPRHGSSDDYLH) are compositionally biased toward basic and acidic residues. A phosphoserine mark is found at serine 243, serine 256, serine 274, serine 280, serine 284, serine 301, serine 306, serine 318, and serine 350. The span at 482–500 (RESAIERERFSKEVQDKDK) shows a compositional bias: basic and acidic residues. The segment at 482-940 (RESAIERERF…NKAEFPSYLL (459 aa)) is disordered. Residues 523-534 (PASQETGSTGNG) are compositionally biased toward polar residues. Composition is skewed to basic and acidic residues over residues 562–572 (DSIKKPEETKQ), 593–625 (PENH…ESKP), 634–663 (KSNE…ESKQ), 672–685 (KQNE…KPND), and 694–899 (ENTK…DTNK). A phosphothreonine mark is found at threonine 713 and threonine 746. The residue at position 906 (serine 906) is a Phosphoserine. Positions 908–933 (NSKDDKRTEGNRSKVDSNKAHTDNKA) are enriched in basic and acidic residues. The PxVxL motif motif lies at 990–1003 (NKGAKPVVVLQKLS). Disordered regions lie at residues 1011–1041 (IKDR…DQSV) and 1054–1186 (ESTM…TPEE). Lysine 1076 carries the post-translational modification N6-acetyllysine. 3 positions are modified to phosphoserine: serine 1083, serine 1084, and serine 1090. The span at 1083-1094 (SSDEDNDSDEAF) shows a compositional bias: acidic residues. Residues 1103–1133 (KDDDKAWEYEERDRRSSGDHRRSGHSHDGRR) are compositionally biased toward basic and acidic residues. Phosphoserine is present on residues serine 1144, serine 1146, and serine 1148. Tyrosine 1153 carries the post-translational modification Phosphotyrosine. At serine 1154 the chain carries Phosphoserine. Residues 1165–1176 (KMKKKEKQKKRK) are compositionally biased toward basic residues. Residue threonine 1183 is modified to Phosphothreonine. Serine 1191 carries the phosphoserine modification. Basic and acidic residues predominate over residues 1685 to 1705 (AMKSQKDEESSDATHHAKELE). Positions 1685–1706 (AMKSQKDEESSDATHHAKELET) are disordered. HEAT repeat units follow at residues 1761-1799 (AQSF…VDPS), 1837-1875 (PQLA…EQPT), 1939-1978 (YDWF…HILK), 2221-2261 (VNLK…LKEM), and 2307-2345 (LIHP…KYAG). Basic and acidic residues predominate over residues 2467–2483 (VKDKRKERKTSPAKENE). Disordered stretches follow at residues 2467-2514 (VKDK…DDIN) and 2645-2690 (TSLL…DSTE). Residues serine 2487, serine 2503, serine 2505, serine 2507, serine 2509, serine 2646, and serine 2652 each carry the phosphoserine modification. The segment covering 2504–2513 (ESDSDSEDDI) has biased composition (acidic residues). Threonine 2661 carries the phosphothreonine modification. Serine 2666 carries the phosphoserine modification.

This sequence belongs to the SCC2/Nipped-B family. As to quaternary structure, heterodimerizes with MAU2/SCC4 to form the cohesin loading complex. The NIPBL-MAU2 heterodimer interacts with the cohesin complex composed of SMC1A/B and SMC3 heterodimer, RAD21 and STAG1/SA1. NIPBL directly contacts all members of the complex, RAD21, SMC1A/B, SMC3 and STAG1. Interacts directly (via PxVxL motif) with CBX3 and CBX5. Interacts with ZNF609 (via N-terminus). Interacts with the multiprotein complex Integrator. Interacts with BRD4. In terms of tissue distribution, spermatocytes and oocytes (at protein level).

It is found in the nucleus. The protein resides in the chromosome. Its function is as follows. Plays an important role in the loading of the cohesin complex on to DNA. Forms a heterodimeric complex (also known as cohesin loading complex) with MAU2/SCC4 which mediates the loading of the cohesin complex onto chromatin. Plays a role in cohesin loading at sites of DNA damage. Its recruitment to double-strand breaks (DSBs) sites occurs in a CBX3-, RNF8- and RNF168-dependent manner whereas its recruitment to UV irradiation-induced DNA damage sites occurs in a ATM-, ATR-, RNF8- and RNF168-dependent manner. Along with ZNF609, promotes cortical neuron migration during brain development by regulating the transcription of crucial genes in this process. Preferentially binds promoters containing paused RNA polymerase II. Up-regulates the expression of SEMA3A, NRP1, PLXND1 and GABBR2 genes, among others. This Mus musculus (Mouse) protein is Nipped-B-like protein (Nipbl).